The sequence spans 323 residues: DNA-directed RNA polymerase subunit alpha (323 aa).

Residues 1–225 (MLDIAMPKIE…QYSQTIADFN (225 aa)) form an alpha N-terminal domain (alpha-NTD) region. The segment at 246-323 (IYDTPIEELD…SHAARAEIEG (78 aa)) is alpha C-terminal domain (alpha-CTD).

Belongs to the RNA polymerase alpha chain family. Homodimer. The RNAP catalytic core consists of 2 alpha, 1 beta, 1 beta' and 1 omega subunit. When a sigma factor is associated with the core the holoenzyme is formed, which can initiate transcription.

The catalysed reaction is RNA(n) + a ribonucleoside 5'-triphosphate = RNA(n+1) + diphosphate. DNA-dependent RNA polymerase catalyzes the transcription of DNA into RNA using the four ribonucleoside triphosphates as substrates. The protein is DNA-directed RNA polymerase subunit alpha of Roseiflexus sp. (strain RS-1).